We begin with the raw amino-acid sequence, 314 residues long: Olfactory receptor 1E2 (314 aa).

Residues 1 to 25 are Extracellular-facing; that stretch reads MMGQNQTSISDFLLLGLPIQPEQQN. N5 carries N-linked (GlcNAc...) asparagine glycosylation. A helical membrane pass occupies residues 26 to 49; sequence LCYALFLAMYLTTLLGNLLIIVLI. The Cytoplasmic segment spans residues 50–57; sequence RLDSHLHT. A helical transmembrane segment spans residues 58–79; sequence PMYLFLSNLSFSDLCFSSVTIP. The Extracellular portion of the chain corresponds to 80–100; the sequence is KLLQNMQNQDPSIPYADCLTQ. A disulfide bridge links C97 with C189. A helical transmembrane segment spans residues 101–120; that stretch reads MHFFLLFGDLESFLLVAMAY. Residues 121 to 139 are Cytoplasmic-facing; that stretch reads DRYVAICFPLHYTAIMSPM. The chain crosses the membrane as a helical span at residues 140–158; the sequence is LCLSVVALSWVLTTFHAML. Residues 159 to 196 are Extracellular-facing; that stretch reads HTLLMARLCFCADNVIPHFFCDMSALLKLACSDTRVNE. A helical membrane pass occupies residues 197–219; it reads WVIFIMGGLIVVIPFLLILGSYA. The Cytoplasmic segment spans residues 220 to 236; that stretch reads RIVSSILKVPSFKGICK. The chain crosses the membrane as a helical span at residues 237 to 260; it reads ALSTCGSHLSVVSLFYGTVIGLYL. Topologically, residues 261–272 are extracellular; the sequence is CPSANSSTLKDT. Residue N265 is glycosylated (N-linked (GlcNAc...) asparagine). A helical membrane pass occupies residues 273-292; it reads VMAMMYTVVTPMLNPFIYSL. At 293–314 the chain is on the cytoplasmic side; sequence RNRDMKGALERVICKRKNPFLL.

It belongs to the G-protein coupled receptor 1 family.

It localises to the cell membrane. Its function is as follows. Odorant receptor. This Pan troglodytes (Chimpanzee) protein is Olfactory receptor 1E2 (OR1E2).